Reading from the N-terminus, the 872-residue chain is Paramyosin (872 aa).

Positions 1–31 are nonhelical region; that stretch reads MSLYRSPSAALLKSPSQAAFGAPFGSMSVAD. The stretch at 32-851 forms a coiled coil; sequence LGSLTRLEDK…ESSLHLIRAK (820 aa). The segment at 294 to 376 is interaction with unc-89; the sequence is EITQWKSKFD…ALLERAREQL (83 aa). Positions 856–866 are nonhelical region; it reads VVTGKSSSKIF.

The protein belongs to the paramyosin family. Homodimer. May interact with unc-89 (via SH3 domain). In terms of processing, phosphorylated on serine residues in the N-terminal non-helical region. As to expression, expressed in body wall muscles of larvae and adults (at protein level). Expressed in gonadal myoepithelial sheath cells (at protein level).

The protein resides in the cytoplasm. The protein localises to the myofibril. It localises to the sarcomere. Its subcellular location is the a band. Functionally, structural component of the muscle thick filaments which is involved in assembly and organization of sarcomere myofilaments. Involved in ovulation. Plays a role in the formation of muscle connections, also called muscle arm extensions, between the body wall and the motor axons in the dorsal and ventral cord. This is Paramyosin (unc-15) from Caenorhabditis elegans.